Consider the following 508-residue polypeptide: MFLEMLNPMHYNVTIMVPETVPVSAMPLLLIMGLLLLIRNCESSSSIPGPGYCLGIGPLISHGRFLWMGIGSACNYYNKMYGEFMRVWISGEETLIISKSSSMVHVMKHSNYISRFGSKRGLQCIGMHENGIIFNNNPSLWRTVRPFFMKALTGPGLIRMVEVCVESIKQHLDRLGDVTDNSGYVDVVTLMRHIMLDTSNTLFLGIPLDESSIVKKIQGYFNAWQALLIKPNIFFKISWLYRKYERSVKDLKDEIEILVEKKRQKVSSAEKLEDCMDFATDLIFAERRGDLTKENVNQCILEMLIAAPDTMSVTLYVMLLLIAEYPEVETAILKEIHTVVGDRDIRIGDVQNLKVVENFINESLRYQPVVDLVMRRALEDDVIDGYPVKKGTNIILNIGRMHRLEYFPKPNEFTLENFEKNVPYRYFQPFGFGPRSCAGKYIAMVMMKVVLVTLLKRFHVKTLQKRCIENMPKNNDLSLHLDEDSPIVEIIFRHIFNTPFLQCLYISL.

Heme is bound at residue Cys437.

Belongs to the cytochrome P450 family. Requires heme as cofactor.

The protein resides in the membrane. The enzyme catalyses testosterone + 3 reduced [NADPH--hemoprotein reductase] + 3 O2 = 17beta-estradiol + formate + 3 oxidized [NADPH--hemoprotein reductase] + 4 H2O + 4 H(+). The catalysed reaction is androst-4-ene-3,17-dione + 3 reduced [NADPH--hemoprotein reductase] + 3 O2 = estrone + formate + 3 oxidized [NADPH--hemoprotein reductase] + 4 H2O + 4 H(+). Functionally, catalyzes the formation of aromatic C18 estrogens from C19 androgens. The chain is Aromatase (Cyp19a1) from Rattus norvegicus (Rat).